A 466-amino-acid polypeptide reads, in one-letter code: Adenosylhomocysteinase (466 aa).

Thr-57, Asp-132, and Glu-192 together coordinate substrate. NAD(+) is bound at residue 193-195 (TTT). 2 residues coordinate substrate: Lys-222 and Asp-226. Residues Asn-227, 256–261 (GYGDVG), Glu-279, Asn-314, 335–337 (IGH), and Asn-380 each bind NAD(+).

The protein belongs to the adenosylhomocysteinase family. NAD(+) is required as a cofactor.

The protein localises to the cytoplasm. The catalysed reaction is S-adenosyl-L-homocysteine + H2O = L-homocysteine + adenosine. Its pathway is amino-acid biosynthesis; L-homocysteine biosynthesis; L-homocysteine from S-adenosyl-L-homocysteine: step 1/1. Functionally, may play a key role in the regulation of the intracellular concentration of adenosylhomocysteine. This chain is Adenosylhomocysteinase, found in Rhizobium etli (strain ATCC 51251 / DSM 11541 / JCM 21823 / NBRC 15573 / CFN 42).